The chain runs to 307 residues: Taste receptor type 2 member 10 (307 aa).

The Extracellular segment spans residues 1-6 (MLRVVE). Residues 7–27 (GIFIFVVISEXVFGVLGNGFI) traverse the membrane as a helical segment. At 28-42 (GLVNCIDCAKNKLST) the chain is on the cytoplasmic side. A helical transmembrane segment spans residues 43 to 63 (IGFILTGLAISRIFLIWIIIT). Residues 64–100 (DGFIQIFSPDIYASGNLIEYISYFWVIGNQSSMWFAT) are Extracellular-facing. Asn92 is a glycosylation site (N-linked (GlcNAc...) asparagine). The chain crosses the membrane as a helical span at residues 101-121 (SLSIFYFLKIANFSNYIFLWL). Topologically, residues 122-126 (KSRTN) are cytoplasmic. A helical transmembrane segment spans residues 127–147 (MVLPFMIVFLLISSLLNFAHI). Residues 148 to 179 (AKILNDYKMKNDTVWDLNMYKSEYFIKQILLN) are Extracellular-facing. A glycan (N-linked (GlcNAc...) asparagine) is linked at Asn158. Residues 180–200 (LGVIFFFTLSLITCVFLIISL) form a helical membrane-spanning segment. Over 201-227 (WRHNRQMQSNVTGLRDSNTEAHVKAMK) the chain is Cytoplasmic. The helical transmembrane segment at 228-248 (VLISFXILFILYFIGMAIEIS) threads the bilayer. Residues 249–257 (CFTVRENKL) lie on the Extracellular side of the membrane. The chain crosses the membrane as a helical span at residues 258 to 278 (LLMFGMTTTAIYPWGHSFILI). At 279 to 307 (LGNSKLKQASLRVLQQLKCCEKRKNLRVT) the chain is on the cytoplasmic side.

Belongs to the G-protein coupled receptor T2R family.

It is found in the membrane. Receptor that may play a role in the perception of bitterness and is gustducin-linked. May play a role in sensing the chemical composition of the gastrointestinal content. The activity of this receptor may stimulate alpha gustducin, mediate PLC-beta-2 activation and lead to the gating of TRPM5. The sequence is that of Taste receptor type 2 member 10 (TAS2R10) from Gorilla gorilla gorilla (Western lowland gorilla).